Reading from the N-terminus, the 315-residue chain is MQGTVYKSTGSWYQVKAEDGKFYECRIKGKFRIQGIKSTNPVAVGDEVSFDLEEGVEEKTGVIKKIKERENYIIRKSVNLSKQTHIIASNIDQVFLLITLNNPPTLTTFIDRFLVTAEAYDITAVLLFNKVDTYSIEELAEVKYLAELYRSAGYECIGISAKNGKNVDKVKDKMIGNTSMISGHSGTGKSTLINAIEPALDLKTSEISRQHSQGQHTTTFAEMFDLSFNARIIDTPGIKGFGVVDMDREEIGDYFPEFFERKQDCKFHNCLHIEEPKCAIKDSLEEGEIAWSRYKSYLQIMEGEEDNYRVDQYQK.

In terms of domain architecture, CP-type G spans 80 to 241 (LSKQTHIIAS…IIDTPGIKGF (162 aa)). Residues 129–132 (NKVD) and 183–191 (GHSGTGKST) contribute to the GTP site. Residues Cys-265, Cys-270, His-272, and Cys-278 each coordinate Zn(2+).

Belongs to the TRAFAC class YlqF/YawG GTPase family. RsgA subfamily. As to quaternary structure, monomer. Associates with 30S ribosomal subunit, binds 16S rRNA. Requires Zn(2+) as cofactor.

It is found in the cytoplasm. Its function is as follows. One of several proteins that assist in the late maturation steps of the functional core of the 30S ribosomal subunit. Helps release RbfA from mature subunits. May play a role in the assembly of ribosomal proteins into the subunit. Circularly permuted GTPase that catalyzes slow GTP hydrolysis, GTPase activity is stimulated by the 30S ribosomal subunit. The protein is Small ribosomal subunit biogenesis GTPase RsgA of Christiangramia forsetii (strain DSM 17595 / CGMCC 1.15422 / KT0803) (Gramella forsetii).